A 398-amino-acid polypeptide reads, in one-letter code: Phosphoglycerate kinase (398 aa).

Substrate contacts are provided by residues 23–25 (DFN), Arg38, 61–64 (HMGK), Arg122, and Arg155. ATP contacts are provided by residues Lys206, Gly297, Glu328, and 354–357 (GGDS).

Belongs to the phosphoglycerate kinase family. As to quaternary structure, monomer.

Its subcellular location is the cytoplasm. The enzyme catalyses (2R)-3-phosphoglycerate + ATP = (2R)-3-phospho-glyceroyl phosphate + ADP. Its pathway is carbohydrate degradation; glycolysis; pyruvate from D-glyceraldehyde 3-phosphate: step 2/5. The chain is Phosphoglycerate kinase from Clostridium botulinum (strain Okra / Type B1).